A 186-amino-acid chain; its full sequence is Elongation factor P (186 aa).

It belongs to the elongation factor P family.

The protein localises to the cytoplasm. It participates in protein biosynthesis; polypeptide chain elongation. Functionally, involved in peptide bond synthesis. Stimulates efficient translation and peptide-bond synthesis on native or reconstituted 70S ribosomes in vitro. Probably functions indirectly by altering the affinity of the ribosome for aminoacyl-tRNA, thus increasing their reactivity as acceptors for peptidyl transferase. The chain is Elongation factor P from Pelagibacter ubique (strain HTCC1062).